The primary structure comprises 297 residues: Lipoyl synthase (297 aa).

[4Fe-4S] cluster is bound by residues C37, C42, C48, C63, C67, C70, and S276. The Radical SAM core domain maps to 49 to 265 (WSRKHATVMI…ERIAKTKGFL (217 aa)).

It belongs to the radical SAM superfamily. Lipoyl synthase family. [4Fe-4S] cluster is required as a cofactor.

It is found in the cytoplasm. The enzyme catalyses [[Fe-S] cluster scaffold protein carrying a second [4Fe-4S](2+) cluster] + N(6)-octanoyl-L-lysyl-[protein] + 2 oxidized [2Fe-2S]-[ferredoxin] + 2 S-adenosyl-L-methionine + 4 H(+) = [[Fe-S] cluster scaffold protein] + N(6)-[(R)-dihydrolipoyl]-L-lysyl-[protein] + 4 Fe(3+) + 2 hydrogen sulfide + 2 5'-deoxyadenosine + 2 L-methionine + 2 reduced [2Fe-2S]-[ferredoxin]. Its pathway is protein modification; protein lipoylation via endogenous pathway; protein N(6)-(lipoyl)lysine from octanoyl-[acyl-carrier-protein]: step 2/2. Functionally, catalyzes the radical-mediated insertion of two sulfur atoms into the C-6 and C-8 positions of the octanoyl moiety bound to the lipoyl domains of lipoate-dependent enzymes, thereby converting the octanoylated domains into lipoylated derivatives. The sequence is that of Lipoyl synthase from Rickettsia prowazekii (strain Madrid E).